Consider the following 756-residue polypeptide: Serine/threonine-protein kinase CBK1 (756 aa).

Disordered regions lie at residues 1 to 180 and 242 to 261; these read MYNS…SYSS and QQQQ…NNGT. Positions 23–34 are enriched in low complexity; sequence QQQDQQHQQQQQ. Residues 53-77 show a composition bias toward polar residues; sequence FSSNYMKEQGSHQSLQEHLQRETGN. T109 is modified (phosphothreonine). Residues 120-180 are compositionally biased toward polar residues; sequence HNNNSQSMVQ…TLRSNGSYSS (61 aa). Low complexity predominate over residues 242–255; the sequence is QQQQQQQSQSPVQS. Positions 352–672 constitute a Protein kinase domain; sequence FHTVKVIGKG…ADEIKSHPFF (321 aa). Residues 358–366 and K381 each bind ATP; that span reads IGKGAFGEV. D475 (proton acceptor) is an active-site residue. The 82-residue stretch at 673 to 754 folds into the AGC-kinase C-terminal domain; the sequence is RGVDWNTIRQ…SRFDYLTRKN (82 aa). The tract at residues 707-732 is disordered; that stretch reads NVPDSPAMAQAAKQREQMTKQGGSAP.

This sequence belongs to the protein kinase superfamily. STE Ser/Thr protein kinase family. COT1 subfamily. As to quaternary structure, associates with PAG1/TAO3 and interacts with MOB2.

The catalysed reaction is L-seryl-[protein] + ATP = O-phospho-L-seryl-[protein] + ADP + H(+). The enzyme catalyses L-threonyl-[protein] + ATP = O-phospho-L-threonyl-[protein] + ADP + H(+). Functionally, protein kinase that seems to play a role in the regulation of cell morphogenesis and proliferation. In Saccharomyces cerevisiae (strain ATCC 204508 / S288c) (Baker's yeast), this protein is Serine/threonine-protein kinase CBK1 (CBK1).